The primary structure comprises 327 residues: Dolichyl-phosphate beta-glucosyltransferase ALG5D (327 aa).

Residues 1–6 lie on the Lumenal side of the membrane; the sequence is MEKQLA. Residues 7–27 form a helical membrane-spanning segment; the sequence is ELSVYILIIFLILGFIMAILM. Over 28 to 327 the chain is Cytoplasmic; it reads RFGDDTTLFD…NIWTIRDRKF (300 aa).

This sequence belongs to the glycosyltransferase 2 family.

The protein resides in the endoplasmic reticulum membrane. The enzyme catalyses a di-trans,poly-cis-dolichyl phosphate + UDP-alpha-D-glucose = a di-trans,poly-cis-dolichyl beta-D-glucosyl phosphate + UDP. It functions in the pathway protein modification; protein glycosylation. Dolichyl-phosphate beta-glucosyltransferase involved in the glycosylation of glycoproteins through the synthesis of dolichyl beta-D-glucosyl phosphate which serves as a sugar donor for transfer of three glucose residues to the Man-9-GlcNAc-2-PP-dolichol precursor to N-glycans. The polypeptide is Dolichyl-phosphate beta-glucosyltransferase ALG5D (Trichomonas vaginalis (strain ATCC PRA-98 / G3)).